The following is a 1122-amino-acid chain: Adhesin P1 (1122 aa).

Positions 1–26 (MKKLIFKLSVGITPLALIGLGSFGLA) are cleaved as a signal peptide. Disordered regions lie at residues 182–208 (ATGD…GGGA), 244–273 (DYNS…GGRT), and 541–562 (GALQ…SNGN). The segment covering 195-208 (AGGGSSSSAAGGGA) has biased composition (gly residues). The span at 259-273 (LDSSESSESINGGRT) shows a compositional bias: polar residues. The chain crosses the membrane as a helical span at residues 1001-1021 (AISIPIIIIALALALGLGIGI). The tract at residues 1066 to 1122 (KTPQMLQANKKDGASSPSKPSAPAAKKPAGPTKPSAPGAKPTAPAKPKAPAPTKKIE) is disordered. Low complexity predominate over residues 1079 to 1122 (ASSPSKPSAPAAKKPAGPTKPSAPGAKPTAPAKPKAPAPTKKIE).

This sequence belongs to the adhesin P1 family.

Its subcellular location is the cell membrane. Its function is as follows. Could be involved in cytadherence. This Mycoplasmoides gallisepticum (strain R(low / passage 15 / clone 2)) (Mycoplasma gallisepticum) protein is Adhesin P1 (gapA).